The primary structure comprises 343 residues: Fructose-1,6-bisphosphatase class 1 (343 aa).

Mg(2+) contacts are provided by glutamate 90, aspartate 109, leucine 111, and aspartate 112. Substrate is bound by residues 112–115 (DGSS) and asparagine 199. Glutamate 271 lines the Mg(2+) pocket.

This sequence belongs to the FBPase class 1 family. As to quaternary structure, homotetramer. Mg(2+) is required as a cofactor.

It localises to the cytoplasm. It carries out the reaction beta-D-fructose 1,6-bisphosphate + H2O = beta-D-fructose 6-phosphate + phosphate. Its pathway is carbohydrate biosynthesis; Calvin cycle. This Rhodopseudomonas palustris (strain HaA2) protein is Fructose-1,6-bisphosphatase class 1.